The primary structure comprises 699 residues: MSRKTPIERYRNIGISAHIDAGKTTTTERILFYTGVNHKIGEVHDGAATMDWMEQEQERGITITSAATTCFWKGMAGKFEEHRINIIDTPGHVDFTIEVERSMRVLDGAVMVYDAVGGVQPQSETVWRQANKYKVPRLAFVNKMDRTGADFLRVRQMMVDRLKANPVVIQIPIGAEEHFQGIVDLVKMKAIIWDEDKGVTFTYGEIPANLTDVCNEYREKLVEAAAEASEELMNKYLEGGELSEEEIKKAIRQRTIAGEIQPMLCGSAFKNKGVQAMLDAVVEYMPAPTDIPPVNGTDEDEAPVTRKADDNEKFSALAFKLMTDPFVGQLTFVRVYSGVLTKGDSVYNPVRGKKERIGRIVQMHANNREEVNEIRAGDIAACVGLKEVTTGETLCDPAAVVTLERMVFPESVISQAVEPKTKADQEKMGIALQRLAQEDPSFRVKTDEESGQTIIAGMGELHLEIIVDRMKREFGVEANVGKPQVAYRETIRKTVEEAEGKFVRQSGGKGQYGHVVLKLEPQEAGKGFEFVDAIKGGVVPREYIPAVEKGVVEALTQGVLAGYPVVDVKVTLHFGSYHDVDSNEMAFKMAAIFGFKEGARKANPVILEPMMAVEVETPEDYAGNVMGDLSSRRGMVQGMDDMIGGGKSIKAEVPLSEMFGYSTTLRSMSQGRATYTMEFKHYAEAPRNVAEAIVAARAK.

Residues 8–289 form the tr-type G domain; that stretch reads ERYRNIGISA…AVVEYMPAPT (282 aa). Residues 17 to 24, 88 to 92, and 142 to 145 contribute to the GTP site; these read AHIDAGKT, DTPGH, and NKMD.

The protein belongs to the TRAFAC class translation factor GTPase superfamily. Classic translation factor GTPase family. EF-G/EF-2 subfamily.

It is found in the cytoplasm. In terms of biological role, catalyzes the GTP-dependent ribosomal translocation step during translation elongation. During this step, the ribosome changes from the pre-translocational (PRE) to the post-translocational (POST) state as the newly formed A-site-bound peptidyl-tRNA and P-site-bound deacylated tRNA move to the P and E sites, respectively. Catalyzes the coordinated movement of the two tRNA molecules, the mRNA and conformational changes in the ribosome. This chain is Elongation factor G, found in Variovorax paradoxus (strain S110).